The primary structure comprises 241 residues: MKILSFKDYNELSKEASKIVLNQVISKPNSVLGLATGSTPLGMYKNLIVAYQNKNIDFSKIKTFNLDEYYGLSKHNNQSYYHYMMENLFNHINIDINNINIPNGTASDILKECSDYEDKIKNYNGIDLQILGIGVNGHIGFNEPSTYFEPSTHVVTLDKKTIESNSRFFSSKEEVPTKAISMGIKTIMNAKKIILLANGKNKADAIFKTVNGKIDPNIPASILQLHNDVTLILDKDAASKL.

Aspartate 67 functions as the Proton acceptor; for enolization step in the catalytic mechanism. Residue asparagine 136 is the For ring-opening step of the active site. The active-site Proton acceptor; for ring-opening step is the histidine 138. Glutamate 143 serves as the catalytic For ring-opening step.

It belongs to the glucosamine/galactosamine-6-phosphate isomerase family. NagB subfamily.

It carries out the reaction alpha-D-glucosamine 6-phosphate + H2O = beta-D-fructose 6-phosphate + NH4(+). The protein operates within amino-sugar metabolism; N-acetylneuraminate degradation; D-fructose 6-phosphate from N-acetylneuraminate: step 5/5. Functionally, catalyzes the reversible isomerization-deamination of glucosamine 6-phosphate (GlcN6P) to form fructose 6-phosphate (Fru6P) and ammonium ion. This is Glucosamine-6-phosphate deaminase from Clostridium novyi (strain NT).